The primary structure comprises 751 residues: Putative tyrosine-protein kinase EpsB (751 aa).

The Cytoplasmic portion of the chain corresponds to 1 to 31 (MTQNLSQPPAVNAPESELDLVRYLDVLVANR). A helical membrane pass occupies residues 32–52 (WLIAGIAAVVMLLGATYAFLA). Over 53 to 444 (RPVYEADVLV…VPEEPVKPKK (392 aa)) the chain is Periplasmic. A helical membrane pass occupies residues 445-465 (LTVTALAGVLGVVLGVVAAFV). Topologically, residues 466-751 (RNTLFGGITE…PSAEAEAESA (286 aa)) are cytoplasmic.

This sequence belongs to the etk/wzc family.

It is found in the cell inner membrane. The catalysed reaction is L-tyrosyl-[protein] + ATP = O-phospho-L-tyrosyl-[protein] + ADP + H(+). Functionally, probably involved in polymerization and/or export of exopolysaccharide EPS I which functions as a virulence factor. May be involved in an ATP-dependent process in the pathway for EPS I production, possibly export of the trimeric repeat units across the inner membrane or their polymerization. This chain is Putative tyrosine-protein kinase EpsB (epsB), found in Ralstonia nicotianae (strain ATCC BAA-1114 / GMI1000) (Ralstonia solanacearum).